Here is a 109-residue protein sequence, read N- to C-terminus: Large ribosomal subunit protein bL19 (109 aa).

The protein belongs to the bacterial ribosomal protein bL19 family.

In terms of biological role, this protein is located at the 30S-50S ribosomal subunit interface and may play a role in the structure and function of the aminoacyl-tRNA binding site. The sequence is that of Large ribosomal subunit protein bL19 from Rubrobacter xylanophilus (strain DSM 9941 / JCM 11954 / NBRC 16129 / PRD-1).